Reading from the N-terminus, the 425-residue chain is uncharacterized protein (425 aa).

This sequence to K.pneumoniae SorE.

This is an uncharacterized protein from Escherichia coli (strain K12).